The primary structure comprises 348 residues: Mitochondrial glycine transporter (348 aa).

Solcar repeat units follow at residues 10–94, 130–214, and 249–333; these read TKST…IREN, LSNT…SKQH, and RAAS…LIRR. Helical transmembrane passes span 16–41, 69–95, 136–161, 189–212, 253–279, and 308–326; these read FVAGLGSGVLSAILLQPIDLLKTRVQ, GTLPSALRTGFGSAIYFTTLNTIRENA, LLAGAVARSFAGFILMPLTVLKVRYE, GFGATAIRDAPYAGLYVLFYEKSK, INFASGVFSAIICSIISNPFDAVKTRI, and GLALRMSRKAMSSALAWTV.

It belongs to the mitochondrial carrier (TC 2.A.29) family. SLC25A38 subfamily.

The protein localises to the mitochondrion inner membrane. It catalyses the reaction glycine(in) = glycine(out). In terms of biological role, mitochondrial glycine transporter that imports glycine into the mitochondrial matrix. Plays an important role in providing glycine for the first enzymatic step in heme biosynthesis, the condensation of glycine with succinyl-CoA to produce 5-aminolevulinate (ALA) in the mitochondrial matrix. The polypeptide is Mitochondrial glycine transporter (mic-13) (Neurospora crassa (strain ATCC 24698 / 74-OR23-1A / CBS 708.71 / DSM 1257 / FGSC 987)).